The primary structure comprises 598 residues: Nuclear receptor subfamily 4 group A member 2 (598 aa).

Residues 1–22 (MPCVQAQYGSSPQGASPASQSY) are disordered. The segment covering 8–22 (YGSSPQGASPASQSY) has biased composition (low complexity). A DNA-binding region (nuclear receptor) is located at residues 260–335 (EGLCAVCGDN…VGMVKEVVRT (76 aa)). 2 NR C4-type zinc fingers span residues 263 to 283 (CAVC…CEGC) and 299 to 323 (CLAN…FQKC). Residues 287–314 (FKRTVQKNAKYVCLANKNCPVDKRRRNR) carry the Bipartite nuclear localization signal (NLS1) motif. The tract at residues 337 to 361 (SLKGRRGRLPSKPKSPQEPSPPSPP) is disordered. The Nuclear localization signal (NLS1) signature appears at 338–350 (LKGRRGRLPSKPK). Positions 352–361 (PQEPSPPSPP) are enriched in pro residues. Residues 360-595 (PPVSLISALV…AIIDKLFLDT (236 aa)) enclose the NR LBD domain. The nuclear export sequence (NES1) signature appears at 443–452 (FLELFVLRLA). The short motif at 568-577 (QGLQRIFYLK) is the nuclear export sequence (NES2) element.

It belongs to the nuclear hormone receptor family. NR4 subfamily. Interacts with SFPQ, NCOR2, SIN3A and HADC1. The interaction with NCOR2 increases in the absence of PITX3. Interacts with PER2. As to expression, expressed in a number of cell lines of T-cell, B-cell and fibroblast origin. Strong expression in brain tissue.

It is found in the cytoplasm. It localises to the nucleus. Functionally, transcriptional regulator which is important for the differentiation and maintenance of meso-diencephalic dopaminergic (mdDA) neurons during development. It is crucial for expression of a set of genes such as SLC6A3, SLC18A2, TH and DRD2 which are essential for development of mdDA neurons. The sequence is that of Nuclear receptor subfamily 4 group A member 2 (NR4A2) from Homo sapiens (Human).